Here is a 144-residue protein sequence, read N- to C-terminus: Small ribosomal subunit protein eS19 (144 aa).

This sequence belongs to the eukaryotic ribosomal protein eS19 family.

This chain is Small ribosomal subunit protein eS19 (RPS19), found in Argopecten irradians (Bay scallop).